A 643-amino-acid polypeptide reads, in one-letter code: ATP-dependent RNA helicase DeaD (643 aa).

The Q motif motif lies at 6-34; the sequence is TTFADLGLKAPILEALTDLGYEKPSPIQA. Positions 37–208 constitute a Helicase ATP-binding domain; that stretch reads IPHLLDGRDV…RRFMKEPQEV (172 aa). 50–57 is a binding site for ATP; it reads AQTGSGKT. The DEAD box motif lies at 156–159; that stretch reads DEAD. In terms of domain architecture, Helicase C-terminal spans 232-379; that stretch reads KNEALVRFLE…EVELPNAELL (148 aa). 2 disordered regions span residues 440 to 482 and 557 to 643; these read VPPV…KRER and MNMQ…GGDA. Composition is skewed to basic and acidic residues over residues 448-482 and 567-643; these read PRRE…KRER and PRTE…GGDA.

This sequence belongs to the DEAD box helicase family. DeaD/CsdA subfamily.

Its subcellular location is the cytoplasm. It carries out the reaction ATP + H2O = ADP + phosphate + H(+). In terms of biological role, DEAD-box RNA helicase involved in various cellular processes at low temperature, including ribosome biogenesis, mRNA degradation and translation initiation. This Klebsiella pneumoniae protein is ATP-dependent RNA helicase DeaD.